Consider the following 553-residue polypeptide: Muellerian-inhibiting factor (553 aa).

An N-terminal signal peptide occupies residues 1-22; the sequence is MQGPHLSLLLLLLATMGAVLQA. Residues 23-445 constitute a propeptide that is removed on maturation; sequence DTVEELTNTR…GREGRGRAGR (423 aa). Residues Asn-325 and Asn-409 are each glycosylated (N-linked (GlcNAc...) asparagine). Cystine bridges form between Cys-455–Cys-519, Cys-481–Cys-550, and Cys-485–Cys-552.

It belongs to the TGF-beta family. As to quaternary structure, homodimer; disulfide-linked. In terms of processing, preproprotein is proteolytically processed to generate N- and C-terminal cleavage products that homodimerize and associate to form a biologically active non-covalent complex. Binding of the non-covalent complex to AMHR2 induces dissociation of the pro-region from the mature C-terminal dimer. The N-terminal portion of the protein, despite having no intrinsic activity, has the role of amplifying the activity of the C-terminus. In terms of tissue distribution, mainly expressed in granulosa cells from preantral and small antral follicles.

The protein resides in the secreted. Functionally, plays an important role in several reproductive functions. Induces Muellerian duct regression during male fetal sexual differentiation and plays a role in Leydig cell differentiation and function. In female acts as a negative regulator of the primordial to primary follicle transition and decreases FSH sensitivity of growing follicles. AMH signals by binding to a specific type-II receptor, AMHR2, that heterodimerizes with type-I receptors (ACVR1 and BMPR1A), and recruiting SMAD proteins that are translocated to the nucleus to regulate target gene expression. This chain is Muellerian-inhibiting factor (Amh), found in Rattus norvegicus (Rat).